A 247-amino-acid chain; its full sequence is 5'-nucleotidase SurE (247 aa).

A divalent metal cation contacts are provided by D8, D9, S39, and N91.

Belongs to the SurE nucleotidase family. The cofactor is a divalent metal cation.

The protein resides in the cytoplasm. It carries out the reaction a ribonucleoside 5'-phosphate + H2O = a ribonucleoside + phosphate. In terms of biological role, nucleotidase that shows phosphatase activity on nucleoside 5'-monophosphates. This chain is 5'-nucleotidase SurE, found in Laribacter hongkongensis (strain HLHK9).